The following is a 985-amino-acid chain: Phosphoenolpyruvate carboxylase (985 aa).

Positions 1 to 17 (MTQSAARRASSRATPAR) are enriched in low complexity. Positions 1 to 55 (MTQSAARRASSRATPARKTPPAPASQTPAPSPGGTAGTALGPTSRRSSGSAAAKD) are disordered. Catalysis depends on residues His-193 and Lys-634.

This sequence belongs to the PEPCase type 1 family. Mg(2+) serves as cofactor.

The catalysed reaction is oxaloacetate + phosphate = phosphoenolpyruvate + hydrogencarbonate. Functionally, forms oxaloacetate, a four-carbon dicarboxylic acid source for the tricarboxylic acid cycle. The protein is Phosphoenolpyruvate carboxylase of Ralstonia nicotianae (strain ATCC BAA-1114 / GMI1000) (Ralstonia solanacearum).